The following is an 81-amino-acid chain: ATP synthase subunit C, plastid (81 aa).

Helical transmembrane passes span 3-23 (PIIS…ASIG) and 57-77 (LAFM…LLFA).

This sequence belongs to the ATPase C chain family. F-type ATPases have 2 components, F(1) - the catalytic core - and F(0) - the membrane proton channel. F(1) has five subunits: alpha(3), beta(3), gamma(1), delta(1), epsilon(1). F(0) has four main subunits: a(1), b(1), b'(1) and c(10-14). The alpha and beta chains form an alternating ring which encloses part of the gamma chain. F(1) is attached to F(0) by a central stalk formed by the gamma and epsilon chains, while a peripheral stalk is formed by the delta, b and b' chains.

It is found in the plastid membrane. Functionally, f(1)F(0) ATP synthase produces ATP from ADP in the presence of a proton or sodium gradient. F-type ATPases consist of two structural domains, F(1) containing the extramembraneous catalytic core and F(0) containing the membrane proton channel, linked together by a central stalk and a peripheral stalk. During catalysis, ATP synthesis in the catalytic domain of F(1) is coupled via a rotary mechanism of the central stalk subunits to proton translocation. In terms of biological role, key component of the F(0) channel; it plays a direct role in translocation across the membrane. A homomeric c-ring of between 10-14 subunits forms the central stalk rotor element with the F(1) delta and epsilon subunits. The protein is ATP synthase subunit C, plastid of Cuscuta gronovii (Common dodder).